The primary structure comprises 468 residues: Tapasin-related protein (468 aa).

Positions 1–18 (MGTQEGWCLLLCLALSGA) are cleaved as a signal peptide. Over 19–405 (AETKPHPAER…STQVVPPERR (387 aa)) the chain is Lumenal. An Ig-like V-type domain is found at 181–297 (PQGTVRTAVE…SLYRAQQIIQ (117 aa)). Disulfide bonds link C212/C283 and C321/C382. Residue N265 is glycosylated (N-linked (GlcNAc...) asparagine). Residues 304-394 (PKVRLSLANE…MHISLEEPLG (91 aa)) form the Ig-like C1-type domain. Residues 406–426 (TALGVIFASSLFLLALLFLGL) form a helical membrane-spanning segment. Residues 427–468 (QRRQAPTRVGLLQAERWKTTSCADTQSSHLHEDRTACVSQPS) lie on the Cytoplasmic side of the membrane.

As to quaternary structure, interacts with peptide-free HLA-A*02-B2M complexes or those loaded with low affinity peptides, likely facilitating peptide exchange onto higher affinity peptides. Interacts with MR1 in a ligand-independent way; this interaction may stabilize MR1 pool and facilitate ligand loading and dissociation.

It is found in the cell membrane. The protein localises to the endoplasmic reticulum membrane. It localises to the microsome membrane. Its subcellular location is the golgi apparatus membrane. In terms of biological role, component of the antigen processing and presentation pathway, which binds to MHC class I coupled with beta2-microglobulin/B2M. Association between TAPBPR and MHC class I occurs in the absence of a functional peptide-loading complex (PLC). Expression seems to slow down and down-regulate MHC class I surface expression. This chain is Tapasin-related protein (TAPBPL), found in Pongo abelii (Sumatran orangutan).